The primary structure comprises 188 residues: RWD domain-containing protein 4 (188 aa).

The 103-residue stretch at 9-111 folds into the RWD domain; that stretch reads MELEALRSIY…EYAKDHKEQF (103 aa). The segment at 132–167 is disordered; sequence TPTTAPSSKKKEKKEQLSKAQKRKLADKTDHKGELP. Residues 155–166 show a composition bias toward basic and acidic residues; that stretch reads KLADKTDHKGEL.

The protein is RWD domain-containing protein 4 (Rwdd4) of Mus musculus (Mouse).